The sequence spans 500 residues: Na(+)/H(+) antiporter NhaB (500 aa).

12 consecutive transmembrane segments (helical) span residues 28–50 (FLML…LLVI), 58–78 (MALK…ALLL), 96–116 (VILL…LLLF), 129–149 (ALLA…LDAL), 150–170 (TVTA…HRVA), 205–225 (LLMH…VGEP), 241–261 (FFLK…VTCL), 311–331 (ILIA…LMVI), 350–370 (FKDA…VAVI), 394–414 (MLFI…VATI), 449–469 (VATP…IAPL), and 477–497 (MVWM…YAVS).

This sequence belongs to the NhaB Na(+)/H(+) (TC 2.A.34) antiporter family.

The protein resides in the cell inner membrane. It catalyses the reaction 2 Na(+)(in) + 3 H(+)(out) = 2 Na(+)(out) + 3 H(+)(in). In terms of biological role, na(+)/H(+) antiporter that extrudes sodium in exchange for external protons. The chain is Na(+)/H(+) antiporter NhaB from Pseudomonas fluorescens (strain Pf0-1).